Reading from the N-terminus, the 884-residue chain is Alanine--tRNA ligase (884 aa).

Positions 562, 566, 676, and 680 each coordinate Zn(2+).

Belongs to the class-II aminoacyl-tRNA synthetase family. Requires Zn(2+) as cofactor.

The protein localises to the cytoplasm. It catalyses the reaction tRNA(Ala) + L-alanine + ATP = L-alanyl-tRNA(Ala) + AMP + diphosphate. Its function is as follows. Catalyzes the attachment of alanine to tRNA(Ala) in a two-step reaction: alanine is first activated by ATP to form Ala-AMP and then transferred to the acceptor end of tRNA(Ala). Also edits incorrectly charged Ser-tRNA(Ala) and Gly-tRNA(Ala) via its editing domain. The chain is Alanine--tRNA ligase from Jannaschia sp. (strain CCS1).